Consider the following 69-residue polypeptide: Pleurain-A3 (69 aa).

A signal peptide spans 1–22 (MFTLKKTLLLLFFLGTISISLC). Positions 23–43 (KQARDADEDDGRKMTEEEVKR) are excised as a propeptide. C63 and C69 are joined by a disulfide.

Belongs to the frog skin active peptide (FSAP) family. Pleurain subfamily. In terms of tissue distribution, expressed by the skin glands.

The protein resides in the secreted. Functionally, antimicrobial peptide. Has activity against Gram-positive and -negative bacteria, and fungi. Has little hemolytic activity on red blood cells. The sequence is that of Pleurain-A3 from Nidirana pleuraden (Yunnan pond frog).